The following is a 296-amino-acid chain: MNSPFHNIGIVTRPNTPDIQDTAHTLITFLKQHGFTVYLDEVGVRECCIYTQDTDGCHIVNKTELGQYCDLVAVLGGDGTFLSAAREITPRAVPIIGINQGHLGFLTQIPREYMTDKLLPVLEGKYLAEERILIEAALIREGKTAERALALNDAVLSRGGAGQMIEFEVFVNQEFVYTQRSDGLIVSTPTGSTAYSLAAGGPIMQAGLHAFTLVPICPQSMTNRPIAIPDTSEIEILVTQGGDARVHFDGQSFIDVQNLDRIIIRRYHNPLRILHPTDYQYFKTLRQKLHWGEQLV.

Catalysis depends on D78, which acts as the Proton acceptor. NAD(+) contacts are provided by residues 78-79 (DG), 152-153 (ND), R180, D182, and Q251.

This sequence belongs to the NAD kinase family. Requires a divalent metal cation as cofactor.

Its subcellular location is the cytoplasm. It catalyses the reaction NAD(+) + ATP = ADP + NADP(+) + H(+). Functionally, involved in the regulation of the intracellular balance of NAD and NADP, and is a key enzyme in the biosynthesis of NADP. Catalyzes specifically the phosphorylation on 2'-hydroxyl of the adenosine moiety of NAD to yield NADP. The sequence is that of NAD kinase from Neisseria gonorrhoeae (strain ATCC 700825 / FA 1090).